The primary structure comprises 334 residues: Lipoyl synthase (334 aa).

The tract at residues 1–36 (MSDALIAPNASSSEAPQSPAEHYDPTRKQKSADKTA) is disordered. Residues 7-20 (APNASSSEAPQSPA) show a composition bias toward low complexity. Positions 21–36 (EHYDPTRKQKSADKTA) are enriched in basic and acidic residues. Positions 81, 86, 92, 107, 111, 114, and 321 each coordinate [4Fe-4S] cluster. The Radical SAM core domain occupies 92 to 310 (CFGKGTATFM…EEEAYKMGFT (219 aa)).

It belongs to the radical SAM superfamily. Lipoyl synthase family. Requires [4Fe-4S] cluster as cofactor.

The protein resides in the cytoplasm. It carries out the reaction [[Fe-S] cluster scaffold protein carrying a second [4Fe-4S](2+) cluster] + N(6)-octanoyl-L-lysyl-[protein] + 2 oxidized [2Fe-2S]-[ferredoxin] + 2 S-adenosyl-L-methionine + 4 H(+) = [[Fe-S] cluster scaffold protein] + N(6)-[(R)-dihydrolipoyl]-L-lysyl-[protein] + 4 Fe(3+) + 2 hydrogen sulfide + 2 5'-deoxyadenosine + 2 L-methionine + 2 reduced [2Fe-2S]-[ferredoxin]. Its pathway is protein modification; protein lipoylation via endogenous pathway; protein N(6)-(lipoyl)lysine from octanoyl-[acyl-carrier-protein]: step 2/2. Its function is as follows. Catalyzes the radical-mediated insertion of two sulfur atoms into the C-6 and C-8 positions of the octanoyl moiety bound to the lipoyl domains of lipoate-dependent enzymes, thereby converting the octanoylated domains into lipoylated derivatives. The polypeptide is Lipoyl synthase (Cupriavidus taiwanensis (strain DSM 17343 / BCRC 17206 / CCUG 44338 / CIP 107171 / LMG 19424 / R1) (Ralstonia taiwanensis (strain LMG 19424))).